The primary structure comprises 150 residues: MQIWVDADACPNVIKEILFRVANRVGIMVTLVANHHIRVPPSPHIRSTQVLAGFDVADDHIVQQAEPGDLVITADIPLADELITNGVHALNPRGELYTKDTIKQRLQMRDFMETMRSSGVQTGGPPPLNQGDRQNFANKLDTFLVKNFKK.

The protein belongs to the UPF0178 family.

The polypeptide is UPF0178 protein PBPRA1738 (Photobacterium profundum (strain SS9)).